The following is a 254-amino-acid chain: Cytochrome c oxidase subunit 2 (254 aa).

Topologically, residues 12-38 (DAPEPWQICYQDSATKIMSGIDKLTGE) are mitochondrial intermembrane. The chain crosses the membrane as a helical span at residues 39-59 (IFYYETLLLIIVGWVLISAII). The Mitochondrial matrix portion of the chain corresponds to 60 to 73 (KYTKTELSYKYFNH). Residues 74–94 (GTLIEILWTCSPAFILIAISF) form a helical membrane-spanning segment. The Mitochondrial intermembrane segment spans residues 95-248 (PSFKLLYLMD…KYLEWLNIHL (154 aa)). Cu cation-binding residues include histidine 182, cysteine 217, glutamate 219, cysteine 221, histidine 225, and methionine 228. Glutamate 219 lines the Mg(2+) pocket.

It belongs to the cytochrome c oxidase subunit 2 family. Component of the cytochrome c oxidase (complex IV, CIV), a multisubunit enzyme composed of a catalytic core of 3 subunits and several supernumerary subunits. The complex exists as a monomer or a dimer and forms supercomplexes (SCs) in the inner mitochondrial membrane with ubiquinol-cytochrome c oxidoreductase (cytochrome b-c1 complex, complex III, CIII). The cofactor is Cu cation.

It localises to the mitochondrion inner membrane. It catalyses the reaction 4 Fe(II)-[cytochrome c] + O2 + 8 H(+)(in) = 4 Fe(III)-[cytochrome c] + 2 H2O + 4 H(+)(out). Functionally, component of the cytochrome c oxidase, the last enzyme in the mitochondrial electron transport chain which drives oxidative phosphorylation. The respiratory chain contains 3 multisubunit complexes succinate dehydrogenase (complex II, CII), ubiquinol-cytochrome c oxidoreductase (cytochrome b-c1 complex, complex III, CIII) and cytochrome c oxidase (complex IV, CIV), that cooperate to transfer electrons derived from NADH and succinate to molecular oxygen, creating an electrochemical gradient over the inner membrane that drives transmembrane transport and the ATP synthase. Cytochrome c oxidase is the component of the respiratory chain that catalyzes the reduction of oxygen to water. Electrons originating from reduced cytochrome c in the intermembrane space (IMS) are transferred via the dinuclear copper A center (CU(A)) of subunit 2 and heme A of subunit 1 to the active site in subunit 1, a binuclear center (BNC) formed by heme A3 and copper B (CU(B)). The BNC reduces molecular oxygen to 2 water molecules using 4 electrons from cytochrome c in the IMS and 4 protons from the mitochondrial matrix. In Zancudomyces culisetae (Gut fungus), this protein is Cytochrome c oxidase subunit 2.